The primary structure comprises 605 residues: Lysophospholipase 1 (605 aa).

The signal sequence occupies residues 1 to 17 (MILHHLLILLIINYCVA). The region spanning 30 to 565 (SCPSSQLIRS…ENYCWDGTIY (536 aa)) is the PLA2c domain. N199, N261, N399, N451, N465, N492, and N573 each carry an N-linked (GlcNAc...) asparagine glycan.

This sequence belongs to the lysophospholipase family.

The protein localises to the secreted. It catalyses the reaction a 1-acyl-sn-glycero-3-phosphocholine + H2O = sn-glycerol 3-phosphocholine + a fatty acid + H(+). Its function is as follows. Catalyzes the release of fatty acids from lysophospholipids. Phospholipase B may well contribute to pathogenicity by abetting the fungus in damaging and traversing host cell membranes, processes which likely increase the rapidity of disseminated infection. The chain is Lysophospholipase 1 from Candida albicans (strain SC5314 / ATCC MYA-2876) (Yeast).